The sequence spans 497 residues: Cytochrome P450 76AD1 (497 aa).

A helical transmembrane segment spans residues 4 to 24 (ATLAMILAIWFISFHFIKLLF). Cys-439 provides a ligand contact to heme.

The protein belongs to the cytochrome P450 family. It depends on heme as a cofactor.

The protein localises to the membrane. It functions in the pathway pigment biosynthesis; betalain biosynthesis. In terms of biological role, converts L-DOPA to cyclo-DOPA in the betalain pathway. Provides the cyclo-DOPA moiety of all red betacyanins. The protein is Cytochrome P450 76AD1 of Beta vulgaris (Sugar beet).